We begin with the raw amino-acid sequence, 137 residues long: Large ribosomal subunit protein uL16 (137 aa).

Positions 1–17 (MLQPKRTKFRKTHKGRN) are enriched in basic residues. Positions 1–24 (MLQPKRTKFRKTHKGRNRGLANSG) are disordered.

This sequence belongs to the universal ribosomal protein uL16 family. Part of the 50S ribosomal subunit.

Functionally, binds 23S rRNA and is also seen to make contacts with the A and possibly P site tRNAs. This is Large ribosomal subunit protein uL16 from Aeromonas hydrophila subsp. hydrophila (strain ATCC 7966 / DSM 30187 / BCRC 13018 / CCUG 14551 / JCM 1027 / KCTC 2358 / NCIMB 9240 / NCTC 8049).